The primary structure comprises 122 residues: Ribosome-binding factor A (122 aa).

It belongs to the RbfA family. In terms of assembly, monomer. Binds 30S ribosomal subunits, but not 50S ribosomal subunits or 70S ribosomes.

It is found in the cytoplasm. One of several proteins that assist in the late maturation steps of the functional core of the 30S ribosomal subunit. Associates with free 30S ribosomal subunits (but not with 30S subunits that are part of 70S ribosomes or polysomes). Required for efficient processing of 16S rRNA. May interact with the 5'-terminal helix region of 16S rRNA. The sequence is that of Ribosome-binding factor A from Caldanaerobacter subterraneus subsp. tengcongensis (strain DSM 15242 / JCM 11007 / NBRC 100824 / MB4) (Thermoanaerobacter tengcongensis).